A 325-amino-acid chain; its full sequence is GMP reductase (325 aa).

Catalysis depends on cysteine 174, which acts as the Thioimidate intermediate. 203–226 (IIADGGIRTHGDIAKSIRFGATMV) provides a ligand contact to NADP(+).

The protein belongs to the IMPDH/GMPR family. GuaC type 2 subfamily.

The enzyme catalyses IMP + NH4(+) + NADP(+) = GMP + NADPH + 2 H(+). In terms of biological role, catalyzes the irreversible NADPH-dependent deamination of GMP to IMP. It functions in the conversion of nucleobase, nucleoside and nucleotide derivatives of G to A nucleotides, and in maintaining the intracellular balance of A and G nucleotides. The sequence is that of GMP reductase from Helicobacter pylori (strain G27).